We begin with the raw amino-acid sequence, 436 residues long: Trigger factor (436 aa).

The 86-residue stretch at 161 to 246 folds into the PPIase FKBP-type domain; sequence GDQVIVDFDG…VREVKEPTLP (86 aa).

It belongs to the FKBP-type PPIase family. Tig subfamily.

The protein localises to the cytoplasm. It carries out the reaction [protein]-peptidylproline (omega=180) = [protein]-peptidylproline (omega=0). Involved in protein export. Acts as a chaperone by maintaining the newly synthesized protein in an open conformation. Functions as a peptidyl-prolyl cis-trans isomerase. The sequence is that of Trigger factor from Thioalkalivibrio sulfidiphilus (strain HL-EbGR7).